The sequence spans 423 residues: UPF0229 protein Pfl01_5140 (423 aa).

The segment at 83–108 (TAGEHIARPPGGGGGRGPGKAGNSGE) is disordered. Over residues 92–107 (PGGGGGRGPGKAGNSG) the composition is skewed to gly residues.

It belongs to the UPF0229 family.

This Pseudomonas fluorescens (strain Pf0-1) protein is UPF0229 protein Pfl01_5140.